The chain runs to 304 residues: uncharacterized protein (304 aa).

The span at serine 226–valine 244 shows a compositional bias: polar residues. Residues serine 226 to isoleucine 263 form a disordered region. Over residues phenylalanine 246 to asparagine 262 the composition is skewed to low complexity.

This is an uncharacterized protein from Acanthamoeba polyphaga (Amoeba).